The sequence spans 589 residues: Protein FAM161B (589 aa).

3 disordered regions span residues Met1 to Trp166, Lys265 to Pro297, and Ala386 to Ser444. Over residues Pro92–Glu106 the composition is skewed to acidic residues. Residues Thr151–Trp166 are compositionally biased toward polar residues. A compositionally biased stretch (basic and acidic residues) spans Lys265–Gln275. A compositionally biased stretch (basic residues) spans Ser287–Pro297. The span at Ala386–Arg396 shows a compositional bias: basic and acidic residues. A coiled-coil region spans residues Glu510 to Glu577.

This sequence belongs to the FAM161 family. In terms of assembly, interacts with FAM161A.

This is Protein FAM161B (Fam161b) from Mus musculus (Mouse).